The sequence spans 442 residues: UDP-N-acetylmuramoylalanine--D-glutamate ligase (442 aa).

115-121 contacts ATP; that stretch reads GSNGKST.

Belongs to the MurCDEF family.

It localises to the cytoplasm. The catalysed reaction is UDP-N-acetyl-alpha-D-muramoyl-L-alanine + D-glutamate + ATP = UDP-N-acetyl-alpha-D-muramoyl-L-alanyl-D-glutamate + ADP + phosphate + H(+). Its pathway is cell wall biogenesis; peptidoglycan biosynthesis. Its function is as follows. Cell wall formation. Catalyzes the addition of glutamate to the nucleotide precursor UDP-N-acetylmuramoyl-L-alanine (UMA). The polypeptide is UDP-N-acetylmuramoylalanine--D-glutamate ligase (Aliivibrio salmonicida (strain LFI1238) (Vibrio salmonicida (strain LFI1238))).